The sequence spans 232 residues: Phosphoribosylformylglycinamidine synthase subunit PurQ (232 aa).

Residues 3 to 232 form the Glutamine amidotransferase type-1 domain; it reads FAVIVFPGSN…SLVASALAVV (230 aa). Residue Cys86 is the Nucleophile of the active site. Catalysis depends on residues His203 and Glu205.

As to quaternary structure, part of the FGAM synthase complex composed of 1 PurL, 1 PurQ and 2 PurS subunits.

The protein resides in the cytoplasm. It catalyses the reaction N(2)-formyl-N(1)-(5-phospho-beta-D-ribosyl)glycinamide + L-glutamine + ATP + H2O = 2-formamido-N(1)-(5-O-phospho-beta-D-ribosyl)acetamidine + L-glutamate + ADP + phosphate + H(+). It carries out the reaction L-glutamine + H2O = L-glutamate + NH4(+). It participates in purine metabolism; IMP biosynthesis via de novo pathway; 5-amino-1-(5-phospho-D-ribosyl)imidazole from N(2)-formyl-N(1)-(5-phospho-D-ribosyl)glycinamide: step 1/2. In terms of biological role, part of the phosphoribosylformylglycinamidine synthase complex involved in the purines biosynthetic pathway. Catalyzes the ATP-dependent conversion of formylglycinamide ribonucleotide (FGAR) and glutamine to yield formylglycinamidine ribonucleotide (FGAM) and glutamate. The FGAM synthase complex is composed of three subunits. PurQ produces an ammonia molecule by converting glutamine to glutamate. PurL transfers the ammonia molecule to FGAR to form FGAM in an ATP-dependent manner. PurS interacts with PurQ and PurL and is thought to assist in the transfer of the ammonia molecule from PurQ to PurL. The protein is Phosphoribosylformylglycinamidine synthase subunit PurQ of Gloeobacter violaceus (strain ATCC 29082 / PCC 7421).